The chain runs to 166 residues: MNPSPRKRVALFTDGACLGNPGPGGWAALLRFNAHEKLLSGGEACTTNNRMELKAAIEGLKALKEPCEVDLYTDSHYLKKAFTEGWLEGWRKRGWRTAEGKPVKNRDLWEALLLAMAPHRVRFHFVKGHTGHPENERVDREARRQAQSQAKTPCPPQAPTLFHEEA.

Residues 5–147 (PRKRVALFTD…VDREARRQAQ (143 aa)) form the RNase H type-1 domain. The Mg(2+) site is built by Asp-14, Glu-52, Asp-74, and Asp-139. Residues 128 to 166 (GHTGHPENERVDREARRQAQSQAKTPCPPQAPTLFHEEA) form a disordered region. Residues 131–144 (GHPENERVDREARR) are compositionally biased toward basic and acidic residues.

The protein belongs to the RNase H family. Monomer. Mg(2+) is required as a cofactor.

It is found in the cytoplasm. The catalysed reaction is Endonucleolytic cleavage to 5'-phosphomonoester.. Endonuclease that specifically degrades the RNA of RNA-DNA hybrids. This chain is Ribonuclease H, found in Thermus thermophilus (strain ATCC BAA-163 / DSM 7039 / HB27).